Consider the following 309-residue polypeptide: UDP-N-acetylenolpyruvoylglucosamine reductase (309 aa).

The FAD-binding PCMH-type domain occupies 24–187 (RVGGPADWLF…TKAVFEAPRG (164 aa)). Arg-167 is a catalytic residue. The segment covering 200-213 (LARRDATQPTKERS) has biased composition (basic and acidic residues). The disordered stretch occupies residues 200–230 (LARRDATQPTKERSAGSTFRNPAGFSSTGRS). Positions 214–228 (AGSTFRNPAGFSSTG) are enriched in polar residues. Ser-216 acts as the Proton donor in catalysis. The active site involves Glu-298.

Belongs to the MurB family. The cofactor is FAD.

It localises to the cytoplasm. The enzyme catalyses UDP-N-acetyl-alpha-D-muramate + NADP(+) = UDP-N-acetyl-3-O-(1-carboxyvinyl)-alpha-D-glucosamine + NADPH + H(+). The protein operates within cell wall biogenesis; peptidoglycan biosynthesis. In terms of biological role, cell wall formation. The sequence is that of UDP-N-acetylenolpyruvoylglucosamine reductase from Roseobacter denitrificans (strain ATCC 33942 / OCh 114) (Erythrobacter sp. (strain OCh 114)).